Reading from the N-terminus, the 1530-residue chain is Glutamate-rich protein 3 (1530 aa).

Disordered stretches follow at residues 165-187 (RLQPLPSNPAVETVPKVTSRSRS), 408-429 (SLPKSRKEKSTEKGEELKKAEG), 475-661 (MTSK…PMPI), 673-724 (TEKG…GLEE), 773-870 (EAME…AVGL), 923-1146 (REAA…LLGE), 1167-1334 (LENI…GMGG), 1360-1383 (LAGSETAEEKTIANKASSFSDVAE), and 1425-1530 (YTTE…NVQV). Basic and acidic residues-rich tracts occupy residues 415-429 (EKSTEKGEELKKAEG), 531-545 (LDDKKDNLDPEKESE), and 552-562 (PDARDNVKDEN). Over residues 563-574 (DGCSESELEEDK) the composition is skewed to acidic residues. The segment covering 581 to 592 (SSTSSRSHPYSS) has biased composition (low complexity). The segment covering 600–616 (VGDREAHTDSSTDESAR) has biased composition (basic and acidic residues). Acidic residues predominate over residues 638–647 (ESLEIEIEDQ). 2 stretches are compositionally biased toward basic and acidic residues: residues 684–717 (LSEKSGKHVSAEEKEKDKSKLWEESTAQVKDKKA) and 773–787 (EAMEEDEAPQHRDAD). The segment covering 834 to 845 (GIERGAEGAAEA) has biased composition (low complexity). Positions 943–958 (GESEEEASIDLEDTGP) are enriched in acidic residues. Composition is skewed to basic and acidic residues over residues 979–992 (EPAKERKEVMRTET), 1039–1116 (EANR…EETK), and 1173–1212 (LRKEGGGERLSEARDTEHKDREELSSRENRALKEGHRQDG). Residues 1213-1225 (EGALAAPEAEPAG) are compositionally biased toward low complexity. Residues 1289–1300 (AVDEDPEEEEDK) are compositionally biased toward acidic residues. Basic and acidic residues-rich tracts occupy residues 1464 to 1487 (GRQETGAAEKFRLGLSREGERELS) and 1502 to 1511 (DFTETREKQQ). Over residues 1517–1530 (ESETADVSPNNVQV) the composition is skewed to polar residues.

In terms of assembly, interacts with CLTC/clathrin heavy chain 1, AP2A2/AP-2 complex subunit alpha-2, and PIK3C2A/phosphatidylinositol 4-phosphate 3-kinase C2 domain-containing subunit alpha. In terms of tissue distribution, expressed in dopaminergic and serotoninergic neurons.

Its subcellular location is the cell projection. The protein resides in the cilium. It is found in the cytoplasm. Its function is as follows. Component of the primary cilium that controls cilium formation and length. May function within retrograde intraflagellar transport (IFT)-associated pathways to remove signaling proteins from primary cilia. Also involved in neuronal vesicle biogenesis and neurotransmitter vesicular function. This chain is Glutamate-rich protein 3, found in Homo sapiens (Human).